Consider the following 145-residue polypeptide: RNAP inhibitory protein (145 aa).

Residues 110–123 (HIKKLNLNSLAMLS) are C-terminal tail, binds in the RNAP DNA-binding channel.

This sequence belongs to the viral ORF131/RIP family. As to quaternary structure, interacts with host RNA polymerase (RNAP) subunits Rpo1N and Rpo2.

It localises to the virion. Its function is as follows. Plays a role in the inhibition of global transcription by interacting with the RNA polymerase (RNAP) clamp, locking it in a fixed position and inhibiting the formation and/or stability of the pre-initiation complex (PIC). Also overlaps with the transcription factor B binding site; overall RIP probably interferes with DNA loading onto RNAP but does not displace DNA once it is loaded. May play a role in virus particle assembly, possibly by dissociating active RNAP from the virus genome. In Acidianus two-tailed virus (ATV), this protein is RNAP inhibitory protein.